We begin with the raw amino-acid sequence, 460 residues long: Bifunctional protein GlmU (460 aa).

A pyrophosphorylase region spans residues 1–232 (MENVAAIILA…SDEIMGVNDR (232 aa)). UDP-N-acetyl-alpha-D-glucosamine is bound by residues 9-12 (LAAG), K23, Q75, and 80-81 (GT). D105 provides a ligand contact to Mg(2+). UDP-N-acetyl-alpha-D-glucosamine-binding residues include G142, E157, N172, and N230. N230 is a binding site for Mg(2+). Residues 233–253 (AQLAQAARILRRRINRDLMLS) are linker. An N-acetyltransferase region spans residues 254 to 460 (GVSLVDPEQT…GWRIRMKKKT (207 aa)). UDP-N-acetyl-alpha-D-glucosamine-binding residues include R336 and K354. The active-site Proton acceptor is H366. Residues Y369 and N380 each contribute to the UDP-N-acetyl-alpha-D-glucosamine site. Acetyl-CoA-binding positions include 389–390 (NY), S408, A426, and R443.

The protein in the N-terminal section; belongs to the N-acetylglucosamine-1-phosphate uridyltransferase family. This sequence in the C-terminal section; belongs to the transferase hexapeptide repeat family. Homotrimer. Requires Mg(2+) as cofactor.

Its subcellular location is the cytoplasm. It carries out the reaction alpha-D-glucosamine 1-phosphate + acetyl-CoA = N-acetyl-alpha-D-glucosamine 1-phosphate + CoA + H(+). It catalyses the reaction N-acetyl-alpha-D-glucosamine 1-phosphate + UTP + H(+) = UDP-N-acetyl-alpha-D-glucosamine + diphosphate. It participates in nucleotide-sugar biosynthesis; UDP-N-acetyl-alpha-D-glucosamine biosynthesis; N-acetyl-alpha-D-glucosamine 1-phosphate from alpha-D-glucosamine 6-phosphate (route II): step 2/2. Its pathway is nucleotide-sugar biosynthesis; UDP-N-acetyl-alpha-D-glucosamine biosynthesis; UDP-N-acetyl-alpha-D-glucosamine from N-acetyl-alpha-D-glucosamine 1-phosphate: step 1/1. It functions in the pathway bacterial outer membrane biogenesis; LPS lipid A biosynthesis. In terms of biological role, catalyzes the last two sequential reactions in the de novo biosynthetic pathway for UDP-N-acetylglucosamine (UDP-GlcNAc). The C-terminal domain catalyzes the transfer of acetyl group from acetyl coenzyme A to glucosamine-1-phosphate (GlcN-1-P) to produce N-acetylglucosamine-1-phosphate (GlcNAc-1-P), which is converted into UDP-GlcNAc by the transfer of uridine 5-monophosphate (from uridine 5-triphosphate), a reaction catalyzed by the N-terminal domain. The sequence is that of Bifunctional protein GlmU from Pelobacter propionicus (strain DSM 2379 / NBRC 103807 / OttBd1).